Reading from the N-terminus, the 468-residue chain is Adenosylhomocysteinase (468 aa).

Positions 57, 132, and 194 each coordinate substrate. 195–197 contacts NAD(+); the sequence is TTT. Substrate-binding residues include Lys-224 and Asp-228. Residues Asn-229, 258 to 263, Glu-281, Asn-316, 337 to 339, and Asn-382 contribute to the NAD(+) site; these read GFGDVG and IGH.

The protein belongs to the adenosylhomocysteinase family. NAD(+) serves as cofactor.

The protein resides in the cytoplasm. The catalysed reaction is S-adenosyl-L-homocysteine + H2O = L-homocysteine + adenosine. Its pathway is amino-acid biosynthesis; L-homocysteine biosynthesis; L-homocysteine from S-adenosyl-L-homocysteine: step 1/1. In terms of biological role, may play a key role in the regulation of the intracellular concentration of adenosylhomocysteine. This Methylobacterium sp. (strain 4-46) protein is Adenosylhomocysteinase.